The following is a 331-amino-acid chain: Bifunctional nuclease 1 (331 aa).

Residues 126-261 enclose the BFN domain; the sequence is CVQNNPRVLR…RIAYNNGLKV (136 aa). A UVR domain is found at 291 to 326; that stretch reads EAQEFDLVRNMLVAAVEERYKDAAQYRDQLFMFRAK.

Belongs to the bifunctional nuclease family.

Its subcellular location is the nucleus. Functionally, bifunctional nuclease with both RNase and DNase activities. Involved in basal defense response. Participates in abscisic acid-derived callose deposition following infection by a necrotrophic pathogen. The chain is Bifunctional nuclease 1 (BBD1) from Oryza sativa subsp. indica (Rice).